A 320-amino-acid polypeptide reads, in one-letter code: MNTVGTPLLWGGFAVVVAIMLAIDLLLQGRRGAHAMTMKQAAAWSLVWVTLSLLFNAAFWWYLVQTEGRAVADPQALAFLTGYLIEKSLAVDNVFVWLMLFSYFSVPAALQRRVLVYGVLGAIVLRTIMIFTGSWLISQFDWILYIFGAFLLFTGVKMALAHEDESGIGDKPLVRWLRGHLRMTDTIDNEHFFVRKNGLLYATPLMLVLILVELSDVIFAVDSIPAIFAVTTDPFIVLTSNLFAILGLRAMYFLLAGVAERFSMLKYGLAVILVFIGIKMLIVDFYHIPIAVSLGVVFGILVMTFIINAWVNYRHDKQRG.

Over 1 to 6 the chain is Periplasmic; sequence MNTVGT. Residues 7–27 traverse the membrane as a helical segment; that stretch reads PLLWGGFAVVVAIMLAIDLLL. Residues 28–43 lie on the Cytoplasmic side of the membrane; the sequence is QGRRGAHAMTMKQAAA. The chain crosses the membrane as a helical span at residues 44–64; it reads WSLVWVTLSLLFNAAFWWYLV. Over 65 to 89 the chain is Periplasmic; the sequence is QTEGRAVADPQALAFLTGYLIEKSL. A helical transmembrane segment spans residues 90–110; the sequence is AVDNVFVWLMLFSYFSVPAAL. At 111–113 the chain is on the cytoplasmic side; that stretch reads QRR. Residues 114-134 traverse the membrane as a helical segment; it reads VLVYGVLGAIVLRTIMIFTGS. A topological domain (periplasmic) is located at residue W135. The helical transmembrane segment at 136–156 threads the bilayer; sequence LISQFDWILYIFGAFLLFTGV. Over 157–198 the chain is Cytoplasmic; it reads KMALAHEDESGIGDKPLVRWLRGHLRMTDTIDNEHFFVRKNG. A helical membrane pass occupies residues 199-219; sequence LLYATPLMLVLILVELSDVIF. Residues 220 to 225 lie on the Periplasmic side of the membrane; sequence AVDSIP. Residues 226 to 246 traverse the membrane as a helical segment; that stretch reads AIFAVTTDPFIVLTSNLFAIL. Residues 247 to 261 are Cytoplasmic-facing; sequence GLRAMYFLLAGVAER. The helical transmembrane segment at 262–282 threads the bilayer; the sequence is FSMLKYGLAVILVFIGIKMLI. Residues 283 to 286 lie on the Periplasmic side of the membrane; the sequence is VDFY. The chain crosses the membrane as a helical span at residues 287-307; sequence HIPIAVSLGVVFGILVMTFII. The Cytoplasmic segment spans residues 308–320; sequence NAWVNYRHDKQRG.

The protein belongs to the TerC family.

It is found in the cell inner membrane. Has been proposed to be a redox modulator. This chain is Putative membrane-bound redox modulator Alx (alx), found in Shigella flexneri.